Here is a 208-residue protein sequence, read N- to C-terminus: MARYRGAVERLERRFGVSLALKGERRLSGKSALDKRAYGPGQHGQRRTKTSDYGLQLKEKQKAKMMYGISEKQFRSIFVEANRLDGNTGENLIRLIERRLDNVVYRMGFATTRSSARQLVTHGHVLVDGKRLDIPSYFVRSGQKIEIKEKTKSNPQVVRAMELTAQTGIVPWIDVEKDKKYGIFTRYPEREEVVVPIEERLIVELYSK.

A disordered region spans residues 31-50 (SALDKRAYGPGQHGQRRTKT). Residues 98–161 (RRLDNVVYRM…KSNPQVVRAM (64 aa)) enclose the S4 RNA-binding domain.

The protein belongs to the universal ribosomal protein uS4 family. In terms of assembly, part of the 30S ribosomal subunit. Contacts protein S5. The interaction surface between S4 and S5 is involved in control of translational fidelity.

Functionally, one of the primary rRNA binding proteins, it binds directly to 16S rRNA where it nucleates assembly of the body of the 30S subunit. Its function is as follows. With S5 and S12 plays an important role in translational accuracy. The sequence is that of Small ribosomal subunit protein uS4 from Helicobacter pylori (strain J99 / ATCC 700824) (Campylobacter pylori J99).